The primary structure comprises 1438 residues: Lysophospholipase NTE1 (1438 aa).

Residues 1-25 lie on the Cytoplasmic side of the membrane; sequence MDSDTSSADFHSTETLVSTPKYSYG. The helical transmembrane segment at 26–46 threads the bilayer; it reads VLINVILLVSWTCFRVVNWFL. Residues 47–64 lie on the Lumenal side of the membrane; it reads VTLPSILLGMLSKTFQIT. Residues 65–85 form a helical membrane-spanning segment; sequence LSLSSILMFVVAVTAICFLVV. Topologically, residues 86–1438 are cytoplasmic; it reads RYKYLTRYSR…HVSLSRRNSI (1353 aa). Over residues 432-450 the composition is skewed to polar residues; it reads YETQTIPNESEDSPTIQRS. The disordered stretch occupies residues 432-464; the sequence is YETQTIPNESEDSPTIQRSSLRRRASHSTSLRK. Residues 590–720 and 707–856 contribute to the a nucleoside 3',5'-cyclic phosphate site; these read GDDS…LTID and RLKR…VANR. The 165-residue stretch at 1131–1295 folds into the PNPLA domain; the sequence is LVLGGGGSRG…LDNLPVSEMK (165 aa). The short motif at 1135–1140 is the GXGXXG element; sequence GGGSRG. The GXSXG motif lies at 1162–1166; sequence GTSIG. Residue Ser-1164 is the Nucleophile of the active site. The Proton acceptor role is filled by Asp-1282. The DGA/G motif lies at 1282–1284; it reads DGG.

It belongs to the NTE family.

The protein resides in the endoplasmic reticulum membrane. The enzyme catalyses a 1-acyl-sn-glycero-3-phosphocholine + H2O = sn-glycerol 3-phosphocholine + a fatty acid + H(+). With respect to regulation, inhibited by organophosphorus esters. Intracellular phospholipase B that catalyzes the double deacylation of phosphatidylcholine (PC) to glycerophosphocholine (GroPCho). Plays an important role in membrane lipid homeostasis. Responsible for the rapid PC turnover in response to inositol, elevated temperatures, or when choline is present in the growth medium. The protein is Lysophospholipase NTE1 (NTE1) of Meyerozyma guilliermondii (strain ATCC 6260 / CBS 566 / DSM 6381 / JCM 1539 / NBRC 10279 / NRRL Y-324) (Yeast).